The chain runs to 285 residues: Methyltransferase grgD (285 aa).

Belongs to the methyltransferase superfamily. LaeA methyltransferase family.

It participates in secondary metabolite biosynthesis. Methyltransferase; part of the gene cluster that mediates the biosynthesis of gregatin A, a fungal polyketide featuring an alkylated furanone core. The PKS grgA synthesizes C11 and C4 polyketide chains in the presence and absence of the trans-enoyl reductase grgB, respectively. The polyketide transferase grgF is then responsible for the fusion of the two carbon chains to produce the furanone skeleton of gregatin A. Next, the cytochrome P450 monooxygenase grgG accepts performs the oxidative cyclization to furnish the gregatin scaffold and leads to the formation of desmethylgregatin A. Finally, the O-methyltransferase grgD methylates the carboxyl group of desmethylgregatin A to provide gregatin A. In Penicillium sp, this protein is Methyltransferase grgD.